Here is a 243-residue protein sequence, read N- to C-terminus: Arginine transport ATP-binding protein ArtP (243 aa).

The region spanning 3-242 (IRVKNLNFFY…KTEQFKHYLS (240 aa)) is the ABC transporter domain. 35–42 (GPSGAGKS) is a binding site for ATP.

The protein belongs to the ABC transporter superfamily. In terms of assembly, the complex is composed of two ATP-binding proteins (ArtP), two transmembrane proteins (ArtM and ArtQ) and a solute-binding protein (ArtI).

Its subcellular location is the cell inner membrane. It carries out the reaction a polar amino acid(out) + ATP + H2O = a polar amino acid(in) + ADP + phosphate + H(+). The catalysed reaction is L-arginine(out) + ATP + H2O = L-arginine(in) + ADP + phosphate + H(+). Functionally, part of the ABC transporter complex ArtPIQM involved in arginine transport. Probably responsible for energy coupling to the transport system. This chain is Arginine transport ATP-binding protein ArtP (artP), found in Haemophilus influenzae (strain ATCC 51907 / DSM 11121 / KW20 / Rd).